A 285-amino-acid chain; its full sequence is Inositol oxygenase (285 aa).

Residues 1-28 (MKVAADPDPSLVSQRDMEPEAAKDKDSF) are disordered. The span at 15–28 (RDMEPEAAKDKDSF) shows a compositional bias: basic and acidic residues. Arg-29 is a binding site for substrate. A Phosphoserine modification is found at Ser-33. Residue 85-87 (DES) coordinates substrate. Fe cation-binding residues include His-98, His-123, and Asp-124. Substrate contacts are provided by residues Lys-127 and 141–142 (GD). Residues His-194, His-220, and Asp-253 each contribute to the Fe cation site. 220-221 (HS) contacts substrate.

This sequence belongs to the myo-inositol oxygenase family. Requires Fe cation as cofactor.

It is found in the cytoplasm. It carries out the reaction myo-inositol + O2 = D-glucuronate + H2O + H(+). It functions in the pathway polyol metabolism; myo-inositol degradation into D-glucuronate; D-glucuronate from myo-inositol: step 1/1. This chain is Inositol oxygenase (MIOX), found in Bos taurus (Bovine).